We begin with the raw amino-acid sequence, 210 residues long: MEPACKYDFATSVLFTEAELHTRMRGVAQRIADDYSNCNLKPLENPLVIVSVLKGSFVFTADMVRILGDFGVPTRVEFLRASSYGHDTKSCGRVDVKADGLCDIRGKHVLVLEDILDTALTLREVVDSLKKSEPASIKTLVAIDKPGGRKIPFTAEYVVADVPNVFVVGYGLDYDQSYREVRDVVILKPSVYETWGKELERRKAAGEAKR.

GMP is bound by residues Lys-54, 113–121 (EDILDTALT), Lys-145, and Asp-173. Residue Asp-117 is the Proton acceptor of the active site. Asp-173 contacts Mg(2+).

Belongs to the purine/pyrimidine phosphoribosyltransferase family. It depends on Mg(2+) as a cofactor.

The protein resides in the cytoplasm. The enzyme catalyses IMP + diphosphate = hypoxanthine + 5-phospho-alpha-D-ribose 1-diphosphate. It catalyses the reaction GMP + diphosphate = guanine + 5-phospho-alpha-D-ribose 1-diphosphate. Its pathway is purine metabolism; IMP biosynthesis via salvage pathway; IMP from hypoxanthine: step 1/1. Its function is as follows. Converts guanine to guanosine monophosphate, and hypoxanthine to inosine monophosphate. Transfers the 5-phosphoribosyl group from 5-phosphoribosylpyrophosphate onto the purine. Plays a central role in the generation of purine nucleotides through the purine salvage pathway. The polypeptide is Hypoxanthine-guanine phosphoribosyltransferase (HGPRT) (Trypanosoma brucei brucei).